The sequence spans 238 residues: Purine nucleoside phosphorylase DeoD-type (238 aa).

A purine D-ribonucleoside is bound at residue His4. Residues Gly20, Arg24, Arg43, and 87–90 each bind phosphate; that span reads RVGS. Residues 179–181 and 203–204 each bind a purine D-ribonucleoside; these read EME and SD. Asp204 (proton donor) is an active-site residue.

Belongs to the PNP/UDP phosphorylase family. Homohexamer; trimer of homodimers.

It carries out the reaction a purine D-ribonucleoside + phosphate = a purine nucleobase + alpha-D-ribose 1-phosphate. It catalyses the reaction a purine 2'-deoxy-D-ribonucleoside + phosphate = a purine nucleobase + 2-deoxy-alpha-D-ribose 1-phosphate. Catalyzes the reversible phosphorolytic breakdown of the N-glycosidic bond in the beta-(deoxy)ribonucleoside molecules, with the formation of the corresponding free purine bases and pentose-1-phosphate. The chain is Purine nucleoside phosphorylase DeoD-type from Actinobacillus succinogenes (strain ATCC 55618 / DSM 22257 / CCUG 43843 / 130Z).